Consider the following 507-residue polypeptide: uncharacterized protein (507 aa).

The span at 1–12 shows a compositional bias: low complexity; the sequence is MEKSISSISKAS. The segment at 1-20 is disordered; that stretch reads MEKSISSISKASMNSDEKLD. 12 helical membrane-spanning segments follow: residues 57-74, 100-120, 126-146, 157-177, 189-209, 221-241, 283-303, 326-346, 353-373, 379-399, 416-436, and 445-465; these read FDFR…FNAL, IMIS…SYLY, ARIL…QAAV, WFLG…LTTF, IFYA…YGVF, YLFL…FLVL, VFKH…GVPL, LMTV…AFIS, GIVL…YGSI, IGVS…SSVL, VFTS…ANIF, and VPAL…VASI.

Belongs to the major facilitator superfamily. Allantoate permease family.

The protein resides in the endoplasmic reticulum. It is found in the membrane. This is an uncharacterized protein from Schizosaccharomyces pombe (strain 972 / ATCC 24843) (Fission yeast).